A 219-amino-acid chain; its full sequence is Small ribosomal subunit protein uS4 (219 aa).

The S4 RNA-binding domain maps to 112–174 (RRLQTQVLRL…GSSPLMSESH (63 aa)). The interval 193 to 219 (KAAAEAKQARERPPERGGGRKKRGGRR) is disordered. Residues 199–210 (KQARERPPERGG) show a composition bias toward basic and acidic residues.

Belongs to the universal ribosomal protein uS4 family. In terms of assembly, part of the 30S ribosomal subunit. Contacts protein S5. The interaction surface between S4 and S5 is involved in control of translational fidelity.

One of the primary rRNA binding proteins, it binds directly to 16S rRNA where it nucleates assembly of the body of the 30S subunit. Functionally, with S5 and S12 plays an important role in translational accuracy. In Methanosarcina mazei (strain ATCC BAA-159 / DSM 3647 / Goe1 / Go1 / JCM 11833 / OCM 88) (Methanosarcina frisia), this protein is Small ribosomal subunit protein uS4.